Consider the following 297-residue polypeptide: Coatomer subunit epsilon-2 (297 aa).

This sequence belongs to the COPE family. Oligomeric complex that consists of at least the alpha, beta, beta', gamma, delta, epsilon and zeta subunits.

Its subcellular location is the cytoplasm. It localises to the golgi apparatus membrane. The protein localises to the cytoplasmic vesicle. The protein resides in the COPI-coated vesicle membrane. In terms of biological role, the coatomer is a cytosolic protein complex that binds to dilysine motifs and reversibly associates with Golgi non-clathrin-coated vesicles, which further mediate biosynthetic protein transport from the ER, via the Golgi up to the trans Golgi network. The coatomer complex is required for budding from Golgi membranes, and is essential for the retrograde Golgi-to-ER transport of dilysine-tagged proteins. The polypeptide is Coatomer subunit epsilon-2 (Oryza sativa subsp. japonica (Rice)).